Here is a 374-residue protein sequence, read N- to C-terminus: Copper-containing nitrite reductase (374 aa).

Positions 1–31 form a signal peptide, tat-type signal; the sequence is MFTRRAALVGAAALASAPLVIRTAGAEEAPA. 2 Plastocyanin-like domains span residues 93 to 189 and 254 to 355; these read MTFD…IMVL and GAVG…VLVE. Residues H126, H131, H166, C167, H177, M182, and H338 each coordinate Cu cation.

It belongs to the multicopper oxidase family. In terms of assembly, homotrimer. The cofactor is Cu(2+). Requires Cu(+) as cofactor. FAD serves as cofactor. In terms of processing, predicted to be exported by the Tat system. The position of the signal peptide cleavage has not been experimentally proven.

The protein resides in the periplasm. The enzyme catalyses nitric oxide + Fe(III)-[cytochrome c] + H2O = Fe(II)-[cytochrome c] + nitrite + 2 H(+). The protein operates within nitrogen metabolism; nitrate reduction (denitrification); dinitrogen from nitrate: step 2/4. In Cereibacter sphaeroides (strain ATCC 17025 / ATH 2.4.3) (Rhodobacter sphaeroides), this protein is Copper-containing nitrite reductase (nirK).